The sequence spans 217 residues: Probable nicotinate-nucleotide adenylyltransferase (217 aa).

It belongs to the NadD family.

The catalysed reaction is nicotinate beta-D-ribonucleotide + ATP + H(+) = deamido-NAD(+) + diphosphate. It functions in the pathway cofactor biosynthesis; NAD(+) biosynthesis; deamido-NAD(+) from nicotinate D-ribonucleotide: step 1/1. Functionally, catalyzes the reversible adenylation of nicotinate mononucleotide (NaMN) to nicotinic acid adenine dinucleotide (NaAD). The sequence is that of Probable nicotinate-nucleotide adenylyltransferase from Moorella thermoacetica (strain ATCC 39073 / JCM 9320).